Reading from the N-terminus, the 1101-residue chain is Type II inositol polyphosphate 5-phosphatase 15 (1101 aa).

The span at 31 to 40 (RSAYSSSSSS) shows a compositional bias: low complexity. A disordered region spans residues 31–54 (RSAYSSSSSSGDDESQPSVDDSNK). WD repeat units follow at residues 121–162 (LRET…GSGR), 180–219 (FGSA…GIEE), 225–263 (AHRG…GKSL), 403–432 (DDSR…MRWD), 433–481 (GNGN…GGWV), and 483–519 (HSGP…PLDN). Catalytic stretches follow at residues 749-765 (DMVI…DDIT) and 828-843 (KKRI…YRDN). Residue K907 forms a Glycyl lysine isopeptide (Lys-Gly) (interchain with G-Cter in ubiquitin) linkage.

The protein belongs to the inositol polyphosphate 5-phosphatase family. Mg(2+) is required as a cofactor. In terms of tissue distribution, predominantly expressed in interfascicular fibers and vascular bundles. Expressed in seedlings, stems, roots and flowers. Expressed at lower level in mature leaves.

The catalysed reaction is a 1,2-diacyl-sn-glycero-3-phospho-(1D-myo-inositol-4,5-bisphosphate) + H2O = a 1,2-diacyl-sn-glycero-3-phospho-(1D-myo-inositol 4-phosphate) + phosphate. It carries out the reaction a 1,2-diacyl-sn-glycero-3-phospho-(1D-myo-inositol-3,4,5-trisphosphate) + H2O = a 1,2-diacyl-sn-glycero-3-phospho-(1D-myo-inositol-3,4-bisphosphate) + phosphate. It catalyses the reaction 1D-myo-inositol 1,4,5-trisphosphate + H2O = 1D-myo-inositol 1,4-bisphosphate + phosphate. In terms of biological role, has phosphatase activity toward PtdIns(4,5)P2, PtdIns(3,4,5)P3 and Ins(1,4,5)P3. Has a higher substrate affinity toward PtdIns(4,5)P2. Required for secondary wall synthesis and actin organization in fiber cells. This is Type II inositol polyphosphate 5-phosphatase 15 from Arabidopsis thaliana (Mouse-ear cress).